A 223-amino-acid chain; its full sequence is Small ribosomal subunit protein uS11m (223 aa).

A mitochondrion-targeting transit peptide spans 1–38 (MVLKHSVTYNLSFFISFTFSSIFFSSLILFLVYKSVLS).

This sequence belongs to the universal ribosomal protein uS11 family. As to quaternary structure, component of the mitochondrial small ribosomal subunit (mt-SSU). Mature yeast 74S mitochondrial ribosomes consist of a small (37S) and a large (54S) subunit. The 37S small subunit contains a 15S ribosomal RNA (15S mt-rRNA) and at least 32 different proteins. The 54S large subunit contains a 21S rRNA (21S mt-rRNA) and at least 45 different proteins.

The protein resides in the mitochondrion. Its function is as follows. Component of the mitochondrial ribosome (mitoribosome), a dedicated translation machinery responsible for the synthesis of mitochondrial genome-encoded proteins, including at least some of the essential transmembrane subunits of the mitochondrial respiratory chain. The mitoribosomes are attached to the mitochondrial inner membrane and translation products are cotranslationally integrated into the membrane. The polypeptide is Small ribosomal subunit protein uS11m (mrps18) (Schizosaccharomyces pombe (strain 972 / ATCC 24843) (Fission yeast)).